Reading from the N-terminus, the 432-residue chain is Short/branched chain specific acyl-CoA dehydrogenase, mitochondrial (432 aa).

A mitochondrion-targeting transit peptide spans M1–L33. K70 bears the N6-acetyllysine; alternate mark. K70 bears the N6-succinyllysine; alternate mark. FAD-binding positions include I174 to S183 and W207 to S209. A substrate-binding site is contributed by S183. At S183 the chain carries Phosphoserine. Residues Y229 and Y283 each contribute to the substrate site. K284 is modified (N6-acetyllysine; alternate). The residue at position 284 (K284) is an N6-succinyllysine; alternate. A substrate-binding site is contributed by N291 to R294. FAD contacts are provided by residues R319, Q330, and E387–G391. The active-site Proton acceptor is the E414. T416–N418 provides a ligand contact to FAD. K426 is subject to N6-acetyllysine.

Belongs to the acyl-CoA dehydrogenase family. As to quaternary structure, homotetramer. FAD serves as cofactor.

The protein resides in the mitochondrion matrix. It carries out the reaction 2-methylbutanoyl-CoA + oxidized [electron-transfer flavoprotein] + H(+) = (2E)-2-methylbut-2-enoyl-CoA + reduced [electron-transfer flavoprotein]. It catalyses the reaction (2S)-2-methylbutanoyl-CoA + oxidized [electron-transfer flavoprotein] + H(+) = (2E)-2-methylbut-2-enoyl-CoA + reduced [electron-transfer flavoprotein]. The catalysed reaction is (2R)-2-methylbutanoyl-CoA + oxidized [electron-transfer flavoprotein] + H(+) = ethylacryloyl-CoA + reduced [electron-transfer flavoprotein]. The enzyme catalyses butanoyl-CoA + oxidized [electron-transfer flavoprotein] + H(+) = (2E)-butenoyl-CoA + reduced [electron-transfer flavoprotein]. It carries out the reaction 2-methylpropanoyl-CoA + oxidized [electron-transfer flavoprotein] + H(+) = 2-methylpropenoyl-CoA + reduced [electron-transfer flavoprotein]. It catalyses the reaction hexanoyl-CoA + oxidized [electron-transfer flavoprotein] + H(+) = (2E)-hexenoyl-CoA + reduced [electron-transfer flavoprotein]. The catalysed reaction is valproyl-CoA + oxidized [electron-transfer flavoprotein] + H(+) = (2E)-2-propylpent-2-enoyl-CoA + reduced [electron-transfer flavoprotein]. It functions in the pathway lipid metabolism; mitochondrial fatty acid beta-oxidation. Its pathway is amino-acid degradation; L-isoleucine degradation. In terms of biological role, short and branched chain specific acyl-CoA dehydrogenase that catalyzes the removal of one hydrogen from C-2 and C-3 of the fatty acyl-CoA thioester, resulting in the formation of trans-2-enoyl-CoA. Among the different mitochondrial acyl-CoA dehydrogenases, acts specifically on short and branched chain acyl-CoA derivatives such as (S)-2-methylbutyryl-CoA as well as short straight chain acyl-CoAs such as butyryl-CoA. Plays an important role in the metabolism of L-isoleucine by catalyzing the dehydrogenation of 2-methylbutyryl-CoA, one of the steps of the L-isoleucine catabolic pathway. Can also act on valproyl-CoA, a metabolite of the valproic acid drug. In Bos taurus (Bovine), this protein is Short/branched chain specific acyl-CoA dehydrogenase, mitochondrial (ACADSB).